The sequence spans 1264 residues: Phosphatidylinositol 3,4,5-trisphosphate 5-phosphatase 2 (1264 aa).

The SH2 domain occupies 26-122 (WYHRDLSRAA…GLVCALLLPV (97 aa)). Residues 124-137 (REREPDPPDDRDVS) show a composition bias toward basic and acidic residues. The segment at 124 to 182 (REREPDPPDDRDVSDGEDEKPPLPPRSGSTSISAPVGPGSPPAAPETPTTPAAESAPNG) is disordered. Residue Ser137 is modified to Phosphoserine. Low complexity predominate over residues 169 to 180 (ETPTTPAAESAP). Phosphothreonine is present on Thr170. Ser246 and Ser358 each carry phosphoserine. The residue at position 892 (Tyr892) is a Phosphotyrosine. The residue at position 896 (Ser896) is a Phosphoserine. The disordered stretch occupies residues 903–1123 (GAKSKAPSVS…TFLGEVASGD (221 aa)). The segment covering 944-954 (PPPTGRPPAPP) has biased composition (pro residues). The short motif at 950–955 (PPAPPR) is the SH3-binding element. Residues 957–971 (ASREEPLTPRLKAEG) are compositionally biased toward basic and acidic residues. Phosphothreonine is present on Thr964. Residues 989–992 (NPAY) carry the NPXY motif motif. Tyr992 is subject to Phosphotyrosine. 3 stretches are compositionally biased toward pro residues: residues 1002–1017 (LLPP…PVPP), 1054–1065 (LPPPDFPPPPLP), and 1093–1110 (GPPP…PGPS). Residue Ser1137 is modified to Phosphoserine. A disordered region spans residues 1140–1178 (DYAPAGPGRSVLLPGPLELQPPRGLPSDYGRPLSFPPPR). Tyr1141 and Tyr1168 each carry phosphotyrosine. The SAM domain maps to 1210-1264 (WLRAIGLERYEEGLVHNGWDDLEFLSDITEEDLEEAGVQDPAHKRLLLDTLQLSK). Position 1263 is a phosphoserine (Ser1263).

This sequence belongs to the inositol 1,4,5-trisphosphate 5-phosphatase family. As to quaternary structure, interacts with tyrosine phosphorylated form of SHC1. Interacts with EGFR. Upon stimulation by the EGF signaling pathway, it forms a complex with SHC1 and EGFR. Interacts with cytoskeletal protein SORBS3/vinexin, promoting its localization to the periphery of cells. Forms a complex with filamin (FLNA or FLNB), actin, GPIb (GP1BA or GP1BB) that regulates cortical and submembraneous actin. Interacts with c-Met/MET, when c-Met/MET is phosphorylated on 'Tyr-1356'. Interacts with p130Cas/BCAR1. Interacts with CENTD3/ARAP3 via its SAM domain. Interacts with c-Cbl/CBL and CAP/SORBS1. Interacts with activated EPHA2 receptor. Interacts with receptor FCGR2A. Interacts with receptor FCGR2B. Interacts with tyrosine kinase ABL1. Interacts with tyrosine kinase TEC. Interacts with CSF1R. Interacts (via N-terminus) with SH3YL1 (via SH3 domain). Interacts with FCRL6 (tyrosine phosphorylated form). Interacts (via SH2 domain) with tyrosine phosphorylated KLRC1 (via ITIM). Interacts with NEDD9/HEF1. Post-translationally, tyrosine phosphorylated by the members of the SRC family after exposure to a diverse array of extracellular stimuli such as insulin, growth factors such as EGF or PDGF, chemokines, integrin ligands and hypertonic and oxidative stress. May be phosphorylated upon IgG receptor FCGR2B-binding. Phosphorylated at Tyr-992 following cell attachment and spreading. Phosphorylated at Tyr-1168 following EGF signaling pathway stimulation. Phosphorylated at Thr-964 in response to PDGF.

The protein localises to the cytoplasm. It is found in the cytosol. The protein resides in the membrane. Its subcellular location is the cell projection. It localises to the filopodium. The protein localises to the lamellipodium. It is found in the basal cell membrane. The protein resides in the nucleus. Its subcellular location is the nucleus speckle. It localises to the cytoskeleton. The protein localises to the spindle pole. It catalyses the reaction a 1,2-diacyl-sn-glycero-3-phospho-(1D-myo-inositol-3,4,5-trisphosphate) + H2O = a 1,2-diacyl-sn-glycero-3-phospho-(1D-myo-inositol-3,4-bisphosphate) + phosphate. The catalysed reaction is 1,2-dioctanoyl-sn-glycero-3-phospho-(1D-myo-inositol-3,4,5-trisphosphate) + H2O = 1,2-dioctanoyl-sn-glycero-3-phospho-(1D-myo-inositol-3,4-bisphosphate) + phosphate. It carries out the reaction 1,2-dihexadecanoyl-sn-glycero-3-phospho-(1D-myo-inositol-3,4,5-trisphosphate) + H2O = 1,2-dihexadecanoyl-sn-glycero-3-phospho-(1D-myo-inositol-3,4-bisphosphate) + phosphate. With respect to regulation, activated upon translocation to the sites of synthesis of PtdIns(3,4,5)P3 in the membrane. Enzymatic activity is enhanced in the presence of phosphatidylserine. Its function is as follows. Phosphatidylinositol (PtdIns) phosphatase that specifically hydrolyzes the 5-phosphate of phosphatidylinositol-3,4,5-trisphosphate (PtdIns(3,4,5)P3) to produce PtdIns(3,4)P2, thereby negatively regulating the PI3K (phosphoinositide 3-kinase) pathways. Required for correct mitotic spindle orientation and therefore progression of mitosis. Plays a central role in regulation of PI3K-dependent insulin signaling, although the precise molecular mechanisms and signaling pathways remain unclear. While overexpression reduces both insulin-stimulated MAP kinase and Akt activation, its absence does not affect insulin signaling or GLUT4 trafficking. Confers resistance to dietary obesity. May act by regulating AKT2, but not AKT1, phosphorylation at the plasma membrane. Part of a signaling pathway that regulates actin cytoskeleton remodeling. Required for the maintenance and dynamic remodeling of actin structures as well as in endocytosis, having a major impact on ligand-induced EGFR internalization and degradation. Participates in regulation of cortical and submembraneous actin by hydrolyzing PtdIns(3,4,5)P3 thereby regulating membrane ruffling. Regulates cell adhesion and cell spreading. Required for HGF-mediated lamellipodium formation, cell scattering and spreading. Acts as a negative regulator of EPHA2 receptor endocytosis by inhibiting via PI3K-dependent Rac1 activation. Acts as a regulator of neuritogenesis by regulating PtdIns(3,4,5)P3 level and is required to form an initial protrusive pattern, and later, maintain proper neurite outgrowth. Acts as a negative regulator of the FC-gamma-RIIA receptor (FCGR2A). Mediates signaling from the FC-gamma-RIIB receptor (FCGR2B), playing a central role in terminating signal transduction from activating immune/hematopoietic cell receptor systems. Involved in EGF signaling pathway. Upon stimulation by EGF, it is recruited by EGFR and dephosphorylates PtdIns(3,4,5)P3. Plays a negative role in regulating the PI3K-PKB pathway, possibly by inhibiting PKB activity. Down-regulates Fc-gamma-R-mediated phagocytosis in macrophages independently of INPP5D/SHIP1. In macrophages, down-regulates NF-kappa-B-dependent gene transcription by regulating macrophage colony-stimulating factor (M-CSF)-induced signaling. Plays a role in the localization of AURKA and NEDD9/HEF1 to the basolateral membrane at interphase in polarized cysts, thereby mediates cell cycle homeostasis, cell polarization and cilia assembly. Additionally promotion of cilia growth is also facilitated by hydrolysis of (PtdIns(3,4,5)P3) to PtdIns(3,4)P2. Promotes formation of apical membrane-initiation sites during the initial stages of lumen formation via Rho family-induced actin filament organization and CTNNB1 localization to cell-cell contacts. May also hydrolyze PtdIns(1,3,4,5)P4, and could thus affect the levels of the higher inositol polyphosphates like InsP6. Involved in endochondral ossification. The polypeptide is Phosphatidylinositol 3,4,5-trisphosphate 5-phosphatase 2 (Canis lupus familiaris (Dog)).